Reading from the N-terminus, the 85-residue chain is Translation initiation factor IF-1 2 (85 aa).

Residues 1-72 (MAKEELIEMH…SKGRITFRHI (72 aa)) form the S1-like domain.

Belongs to the IF-1 family. As to quaternary structure, component of the 30S ribosomal translation pre-initiation complex which assembles on the 30S ribosome in the order IF-2 and IF-3, IF-1 and N-formylmethionyl-tRNA(fMet); mRNA recruitment can occur at any time during PIC assembly.

It is found in the cytoplasm. In terms of biological role, one of the essential components for the initiation of protein synthesis. Stabilizes the binding of IF-2 and IF-3 on the 30S subunit to which N-formylmethionyl-tRNA(fMet) subsequently binds. Helps modulate mRNA selection, yielding the 30S pre-initiation complex (PIC). Upon addition of the 50S ribosomal subunit IF-1, IF-2 and IF-3 are released leaving the mature 70S translation initiation complex. The protein is Translation initiation factor IF-1 2 of Polaromonas sp. (strain JS666 / ATCC BAA-500).